Consider the following 199-residue polypeptide: Probable nicotinate-nucleotide adenylyltransferase (199 aa).

The protein belongs to the NadD family.

It carries out the reaction nicotinate beta-D-ribonucleotide + ATP + H(+) = deamido-NAD(+) + diphosphate. It functions in the pathway cofactor biosynthesis; NAD(+) biosynthesis; deamido-NAD(+) from nicotinate D-ribonucleotide: step 1/1. In terms of biological role, catalyzes the reversible adenylation of nicotinate mononucleotide (NaMN) to nicotinic acid adenine dinucleotide (NaAD). The protein is Probable nicotinate-nucleotide adenylyltransferase of Roseobacter denitrificans (strain ATCC 33942 / OCh 114) (Erythrobacter sp. (strain OCh 114)).